A 61-amino-acid polypeptide reads, in one-letter code: Small ribosomal subunit protein uS14 (61 aa).

The Zn(2+) site is built by cysteine 24, cysteine 27, cysteine 40, and cysteine 43.

It belongs to the universal ribosomal protein uS14 family. Zinc-binding uS14 subfamily. As to quaternary structure, part of the 30S ribosomal subunit. Contacts proteins S3 and S10. Zn(2+) serves as cofactor.

Functionally, binds 16S rRNA, required for the assembly of 30S particles and may also be responsible for determining the conformation of the 16S rRNA at the A site. In Desulfatibacillum aliphaticivorans, this protein is Small ribosomal subunit protein uS14.